Consider the following 244-residue polypeptide: Probable 2-phosphosulfolactate phosphatase (244 aa).

It belongs to the ComB family. Requires Mg(2+) as cofactor.

It catalyses the reaction (2R)-O-phospho-3-sulfolactate + H2O = (2R)-3-sulfolactate + phosphate. The sequence is that of Probable 2-phosphosulfolactate phosphatase from Cyanothece sp. (strain PCC 7425 / ATCC 29141).